Consider the following 112-residue polypeptide: Putative pterin-4-alpha-carbinolamine dehydratase (112 aa).

This sequence belongs to the pterin-4-alpha-carbinolamine dehydratase family.

The catalysed reaction is (4aS,6R)-4a-hydroxy-L-erythro-5,6,7,8-tetrahydrobiopterin = (6R)-L-erythro-6,7-dihydrobiopterin + H2O. This Photobacterium profundum (strain SS9) protein is Putative pterin-4-alpha-carbinolamine dehydratase.